A 263-amino-acid chain; its full sequence is Hydroxyethylthiazole kinase (263 aa).

Met39 is a binding site for substrate. Positions 115 and 160 each coordinate ATP. Position 187 (Gly187) interacts with substrate.

Belongs to the Thz kinase family. Requires Mg(2+) as cofactor.

The enzyme catalyses 5-(2-hydroxyethyl)-4-methylthiazole + ATP = 4-methyl-5-(2-phosphooxyethyl)-thiazole + ADP + H(+). It participates in cofactor biosynthesis; thiamine diphosphate biosynthesis; 4-methyl-5-(2-phosphoethyl)-thiazole from 5-(2-hydroxyethyl)-4-methylthiazole: step 1/1. Its function is as follows. Catalyzes the phosphorylation of the hydroxyl group of 4-methyl-5-beta-hydroxyethylthiazole (THZ). This Staphylococcus aureus (strain COL) protein is Hydroxyethylthiazole kinase.